The following is a 363-amino-acid chain: Phosphoribosylformylglycinamidine cyclo-ligase (363 aa).

This sequence belongs to the AIR synthase family.

Its subcellular location is the cytoplasm. The catalysed reaction is 2-formamido-N(1)-(5-O-phospho-beta-D-ribosyl)acetamidine + ATP = 5-amino-1-(5-phospho-beta-D-ribosyl)imidazole + ADP + phosphate + H(+). It functions in the pathway purine metabolism; IMP biosynthesis via de novo pathway; 5-amino-1-(5-phospho-D-ribosyl)imidazole from N(2)-formyl-N(1)-(5-phospho-D-ribosyl)glycinamide: step 2/2. This chain is Phosphoribosylformylglycinamidine cyclo-ligase, found in Bartonella tribocorum (strain CIP 105476 / IBS 506).